Here is a 397-residue protein sequence, read N- to C-terminus: Succinate--CoA ligase [ADP-forming] subunit beta (397 aa).

Positions 9–254 constitute an ATP-grasp domain; that stretch reads KALLKGYGAP…ETEEDAKEIE (246 aa). Residues lysine 46, 53-55, glutamate 109, alanine 112, and glutamate 117 each bind ATP; that span reads GRG. Residues asparagine 209 and aspartate 223 each coordinate Mg(2+). Substrate is bound by residues asparagine 274 and 331–333; that span reads GIM.

Belongs to the succinate/malate CoA ligase beta subunit family. In terms of assembly, heterotetramer of two alpha and two beta subunits. It depends on Mg(2+) as a cofactor.

The enzyme catalyses succinate + ATP + CoA = succinyl-CoA + ADP + phosphate. It catalyses the reaction GTP + succinate + CoA = succinyl-CoA + GDP + phosphate. Its pathway is carbohydrate metabolism; tricarboxylic acid cycle; succinate from succinyl-CoA (ligase route): step 1/1. In terms of biological role, succinyl-CoA synthetase functions in the citric acid cycle (TCA), coupling the hydrolysis of succinyl-CoA to the synthesis of either ATP or GTP and thus represents the only step of substrate-level phosphorylation in the TCA. The beta subunit provides nucleotide specificity of the enzyme and binds the substrate succinate, while the binding sites for coenzyme A and phosphate are found in the alpha subunit. This Rhizobium johnstonii (strain DSM 114642 / LMG 32736 / 3841) (Rhizobium leguminosarum bv. viciae) protein is Succinate--CoA ligase [ADP-forming] subunit beta.